We begin with the raw amino-acid sequence, 196 residues long: MIKQASFITSSANKSNWIDDDVSEICLIGRSNVGKSSFINSLTNNNKLAKISNTPGKTRLLNFFEINKGEYRLVDAPGYGYAKVDDNLKIQFAKMMEEYFINRRNLKGVFLLLDLRHKPSNDDIMMYQFLKHYNIPVVIIGTKLDKLKKSEYVKNEKMIKETISFYQEDDFVKISNLNKTNIIKCYELIDKLLGSK.

One can recognise an EngB-type G domain in the interval 21-195; sequence DVSEICLIGR…YELIDKLLGS (175 aa). GTP contacts are provided by residues 29 to 36, 56 to 60, 75 to 78, 142 to 145, and 174 to 176; these read GRSNVGKS, GKTRL, DAPG, TKLD, and ISN. Mg(2+) contacts are provided by serine 36 and threonine 58.

It belongs to the TRAFAC class TrmE-Era-EngA-EngB-Septin-like GTPase superfamily. EngB GTPase family. Mg(2+) serves as cofactor.

Its function is as follows. Necessary for normal cell division and for the maintenance of normal septation. This is Probable GTP-binding protein EngB from Mycoplasma mycoides subsp. mycoides SC (strain CCUG 32753 / NCTC 10114 / PG1).